Here is a 527-residue protein sequence, read N- to C-terminus: Pentatricopeptide repeat-containing protein At4g25270, chloroplastic (527 aa).

A chloroplast-targeting transit peptide spans 1-47; it reads MVSIVVHKPSFSYPSVSSSSMKKKPRHHQQLKQHRQNQYNNNGFTSL. The tract at residues 12-44 is disordered; the sequence is SYPSVSSSSMKKKPRHHQQLKQHRQNQYNNNGF. Over residues 21–35 the composition is skewed to basic residues; that stretch reads MKKKPRHHQQLKQHR. 10 PPR repeats span residues 126–156, 159–193, 194–228, 229–259, 260–294, 295–326, 327–361, 367–389, 390–425, and 426–457; these read NLGISSKLVRLYASCGYAEVAHEVFDRMSKR, SPFAWNSLISGYAELGQYEDAMALYFQMAEDGVKP, DRFTFPRVLKACGGIGSVQIGEAIHRDLVKEGFGY, DVYVLNALVVMYAKCGDIVKARNVFDMIPHK, DYVSWNSMLTGYLHHGLLHEALDIFRLMVQNGIEP, DKVAISSVLARVLSFKHGRQLHGWVIRRGMEW, ELSVANALIVLYSKRGQLGQACFIFDQMLERDTVS, SAHSKNSNGLKYFEQMHRANAKP, DGITFVSVLSLCANTGMVEDGERLFSLMSKEYGIDP, and KMEHYACMVNLYGRAGMMEEAYSMIVQEMGLE. Positions 462–527 are type E motif; degenerate; that stretch reads VWGALLYACY…QMMVDRGLET (66 aa).

The protein belongs to the PPR family. PCMP-E subfamily.

It localises to the plastid. The protein localises to the chloroplast. This is Pentatricopeptide repeat-containing protein At4g25270, chloroplastic (PCMP-E53) from Arabidopsis thaliana (Mouse-ear cress).